A 186-amino-acid polypeptide reads, in one-letter code: dCTP deaminase (186 aa).

K107–R112 serves as a coordination point for dCTP. The Proton donor/acceptor role is filled by E133. 4 residues coordinate dCTP: Q152, Y166, K175, and Q176.

The protein belongs to the dCTP deaminase family. In terms of assembly, homotrimer.

It catalyses the reaction dCTP + H2O + H(+) = dUTP + NH4(+). It functions in the pathway pyrimidine metabolism; dUMP biosynthesis; dUMP from dCTP (dUTP route): step 1/2. Catalyzes the deamination of dCTP to dUTP. This Wolinella succinogenes (strain ATCC 29543 / DSM 1740 / CCUG 13145 / JCM 31913 / LMG 7466 / NCTC 11488 / FDC 602W) (Vibrio succinogenes) protein is dCTP deaminase.